Here is a 468-residue protein sequence, read N- to C-terminus: UDP-N-acetylmuramate--L-alanine ligase (468 aa).

Residue 121–127 (GSHGKTT) participates in ATP binding.

Belongs to the MurCDEF family.

Its subcellular location is the cytoplasm. It carries out the reaction UDP-N-acetyl-alpha-D-muramate + L-alanine + ATP = UDP-N-acetyl-alpha-D-muramoyl-L-alanine + ADP + phosphate + H(+). The protein operates within cell wall biogenesis; peptidoglycan biosynthesis. In terms of biological role, cell wall formation. In Borrelia garinii subsp. bavariensis (strain ATCC BAA-2496 / DSM 23469 / PBi) (Borreliella bavariensis), this protein is UDP-N-acetylmuramate--L-alanine ligase.